The chain runs to 349 residues: Green-sensitive opsin-4 (349 aa).

At 1–36 the chain is on the extracellular side; sequence MNGTEGNNFYIPLSNRTGLARSPYEYPQYYLAEPWQ. Asn2 and Asn15 each carry an N-linked (GlcNAc...) asparagine glycan. The helical transmembrane segment at 37 to 61 threads the bilayer; sequence FKLLAVYMFFLICLGFPINGLTLLV. The Cytoplasmic segment spans residues 62-73; it reads TAQHKKLRQPLN. A helical membrane pass occupies residues 74-99; that stretch reads FILVNLAVAGTIMVCFGFTVTFYTAI. Over 100-113 the chain is Extracellular; sequence NGYFVLGPTGCAIE. A disulfide bond links Cys110 and Cys187. A helical transmembrane segment spans residues 114–133; that stretch reads GFMATLGGEVALWSLVVLAV. Residues 134 to 152 are Cytoplasmic-facing; sequence ERYIVVCKPMGSFKFSASH. Residues 153–176 form a helical membrane-spanning segment; sequence AFAGCAFTWVMAMACAAPPLVGWS. Residues 177–202 lie on the Extracellular side of the membrane; it reads RYIPEGMQCSCGPDYYTLNPEYNNES. Asn200 carries N-linked (GlcNAc...) asparagine glycosylation. The helical transmembrane segment at 203 to 230 threads the bilayer; sequence YVLYMFICHFILPVTIIFFTYGRLVCTV. Residues 231–252 are Cytoplasmic-facing; sequence KAAAAQQQESESTQKAEREVTR. A helical membrane pass occupies residues 253-276; the sequence is MVILMVLGFLIAWTPYATVAAWIF. Residues 277–284 are Extracellular-facing; it reads FNKGAAFS. Residues 285 to 309 traverse the membrane as a helical segment; sequence AQFMAVPAFFSKTSALYNPVIYVLL. The residue at position 296 (Lys296) is an N6-(retinylidene)lysine. The Cytoplasmic portion of the chain corresponds to 310–349; that stretch reads NKQFRNCMLTTLFCGKNPLGDDESSTVSTSKTEVSSVSPA. The segment at 329-349 is disordered; it reads GDDESSTVSTSKTEVSSVSPA. Over residues 334-349 the composition is skewed to low complexity; it reads STVSTSKTEVSSVSPA.

It belongs to the G-protein coupled receptor 1 family. Opsin subfamily. Phosphorylated on some or all of the serine and threonine residues present in the C-terminal region. As to expression, retinal double cone accessory photoreceptor cell outer segments.

It localises to the membrane. Its function is as follows. Visual pigments are the light-absorbing molecules that mediate vision. They consist of an apoprotein, opsin, covalently linked to cis-retinal. This is Green-sensitive opsin-4 (opn1mw4) from Danio rerio (Zebrafish).